We begin with the raw amino-acid sequence, 101 residues long: Protein Tat (101 aa).

The interval 1-24 (MEPVDPNLEPWNHPGSQPKTACNN) is interaction with human CREBBP. Residues 1-48 (MEPVDPNLEPWNHPGSQPKTACNNCYCKRCSYHCLVCFQTKGLGISYG) are transactivation. Zn(2+) contacts are provided by C22, C25, and C27. A cysteine-rich region spans residues 22–37 (CNNCYCKRCSYHCLVC). N6-acetyllysine; by host PCAF is present on K28. C30, H33, C34, and C37 together coordinate Zn(2+). Positions 38–48 (FQTKGLGISYG) are core. The segment at 47-101 (YGRKKRRQRRSAPPSSEDHQNPIPKQPLPQTRGDQTGSEESKKKVESKTETDPFD) is disordered. Residues 49 to 57 (RKKRRQRRS) carry the Nuclear localization signal, RNA-binding (TAR), and protein transduction motif. The interval 49-86 (RKKRRQRRSAPPSSEDHQNPIPKQPLPQTRGDQTGSEE) is interaction with the host capping enzyme RNGTT. 2 positions are modified to N6-acetyllysine; by host EP300 and GCN5L2: K50 and K51. Residues R52 and R53 each carry the asymmetric dimethylarginine; by host PRMT6 modification. K71 is covalently cross-linked (Glycyl lysine isopeptide (Lys-Gly) (interchain with G-Cter in ubiquitin)). The Cell attachment site signature appears at 78–80 (RGD). A compositionally biased stretch (basic and acidic residues) spans 85-101 (EESKKKVESKTETDPFD).

The protein belongs to the lentiviruses Tat family. As to quaternary structure, interacts with host CCNT1. Associates with the P-TEFb complex composed at least of Tat, P-TEFb (CDK9 and CCNT1), TAR RNA, RNA Pol II. Recruits the HATs CREBBP, TAF1/TFIID, EP300, PCAF and GCN5L2. Interacts with host KAT5/Tip60; this interaction targets the latter to degradation. Interacts with the host deacetylase SIRT1. Interacts with host capping enzyme RNGTT; this interaction stimulates RNGTT. Binds to host KDR, and to the host integrins ITGAV/ITGB3 and ITGA5/ITGB1. Interacts with host KPNB1/importin beta-1 without previous binding to KPNA1/importin alpha-1. Interacts with EIF2AK2. Interacts with host nucleosome assembly protein NAP1L1; this interaction may be required for the transport of Tat within the nucleus, since the two proteins interact at the nuclear rim. Interacts with host C1QBP/SF2P32; this interaction involves lysine-acetylated Tat. Interacts with the host chemokine receptors CCR2, CCR3 and CXCR4. Interacts with host DPP4/CD26; this interaction may trigger an anti-proliferative effect. Interacts with host LDLR. Interacts with the host extracellular matrix metalloproteinase MMP1. Interacts with host PRMT6; this interaction mediates Tat's methylation. Interacts with, and is ubiquitinated by MDM2/Hdm2. Interacts with host PSMC3 and HTATIP2. Interacts with STAB1; this interaction may overcome SATB1-mediated repression of IL2 and IL2RA (interleukin) in T cells by binding to the same domain than HDAC1. Interacts (when acetylated) with human CDK13, thereby increasing HIV-1 mRNA splicing and promoting the production of the doubly spliced HIV-1 protein Nef. Interacts with host TBP; this interaction modulates the activity of transcriptional pre-initiation complex. Interacts with host RELA. Interacts with host PLSCR1; this interaction negatively regulates Tat transactivation activity by altering its subcellular distribution. Post-translationally, asymmetrical arginine methylation by host PRMT6 seems to diminish the transactivation capacity of Tat and affects the interaction with host CCNT1. In terms of processing, acetylation by EP300, CREBBP, GCN5L2/GCN5 and PCAF regulates the transactivation activity of Tat. EP300-mediated acetylation of Lys-50 promotes dissociation of Tat from the TAR RNA through the competitive binding to PCAF's bromodomain. In addition, the non-acetylated Tat's N-terminus can also interact with PCAF. PCAF-mediated acetylation of Lys-28 enhances Tat's binding to CCNT1. Lys-50 is deacetylated by SIRT1. Polyubiquitination by host MDM2 does not target Tat to degradation, but activates its transactivation function and fosters interaction with CCNT1 and TAR RNA. Post-translationally, phosphorylated by EIF2AK2 on serine and threonine residues adjacent to the basic region important for TAR RNA binding and function. Phosphorylation of Tat by EIF2AK2 is dependent on the prior activation of EIF2AK2 by dsRNA.

Its subcellular location is the host nucleus. The protein resides in the host nucleolus. It localises to the host cytoplasm. It is found in the secreted. Transcriptional activator that increases RNA Pol II processivity, thereby increasing the level of full-length viral transcripts. Recognizes a hairpin structure at the 5'-LTR of the nascent viral mRNAs referred to as the transactivation responsive RNA element (TAR) and recruits the cyclin T1-CDK9 complex (P-TEFb complex) that will in turn hyperphosphorylate the RNA polymerase II to allow efficient elongation. The CDK9 component of P-TEFb and other Tat-activated kinases hyperphosphorylate the C-terminus of RNA Pol II that becomes stabilized and much more processive. Other factors such as HTATSF1/Tat-SF1, SUPT5H/SPT5, and HTATIP2 are also important for Tat's function. Besides its effect on RNA Pol II processivity, Tat induces chromatin remodeling of proviral genes by recruiting the histone acetyltransferases (HATs) CREBBP, EP300 and PCAF to the chromatin. This also contributes to the increase in proviral transcription rate, especially when the provirus integrates in transcriptionally silent region of the host genome. To ensure maximal activation of the LTR, Tat mediates nuclear translocation of NF-kappa-B by interacting with host RELA. Through its interaction with host TBP, Tat may also modulate transcription initiation. Tat can reactivate a latently infected cell by penetrating in it and transactivating its LTR promoter. In the cytoplasm, Tat is thought to act as a translational activator of HIV-1 mRNAs. Functionally, extracellular circulating Tat can be endocytosed by surrounding uninfected cells via the binding to several surface receptors such as CD26, CXCR4, heparan sulfate proteoglycans (HSPG) or LDLR. Neurons are rarely infected, but they internalize Tat via their LDLR. Through its interaction with nuclear HATs, Tat is potentially able to control the acetylation-dependent cellular gene expression. Modulates the expression of many cellular genes involved in cell survival, proliferation or in coding for cytokines or cytokine receptors. Tat plays a role in T-cell and neurons apoptosis. Tat induced neurotoxicity and apoptosis probably contribute to neuroAIDS. Circulating Tat also acts as a chemokine-like and/or growth factor-like molecule that binds to specific receptors on the surface of the cells, affecting many cellular pathways. In the vascular system, Tat binds to ITGAV/ITGB3 and ITGA5/ITGB1 integrins dimers at the surface of endothelial cells and competes with bFGF for heparin-binding sites, leading to an excess of soluble bFGF. The sequence is that of Protein Tat from Human immunodeficiency virus type 1 group M subtype C (isolate 92BR025) (HIV-1).